The chain runs to 876 residues: Exosome complex component 10 homolog (876 aa).

A disordered region spans residues 1 to 22; sequence MSGEESMPDEEQKQSEEEEEMI. The region spanning 279 to 445 is the 3'-5' exonuclease domain; the sequence is TMIDTKEKLE…YSYDMLREQL (167 aa). Positions 303, 305, 361, and 430 each coordinate Mg(2+). An HRDC domain is found at 489–569; it reads NTRQDYALTH…VEARDVKLEK (81 aa). Basic and acidic residues-rich tracts occupy residues 690-730, 741-752, and 834-847; these read EKQE…EFDA, VPDDPNKPKDPE, and KPVRDNNADFDPFH. A disordered region spans residues 690-876; the sequence is EKQEEEERKE…NRQGTINYKK (187 aa). Positions 848–861 are enriched in basic residues; it reads QKYRLKNKTKKNMA.

Belongs to the exosome component 10/RRP6 family. Component of the RNA exosome complex. Interacts with crn-5. Requires Mg(2+) as cofactor. In terms of tissue distribution, ubiquitously expressed.

It is found in the nucleus. The protein localises to the nucleolus. The protein resides in the nucleoplasm. Catalytic component of the RNA exosome complex which has 3'-&gt;5' exoribonuclease activity and participates in a multitude of cellular RNA processing and degradation events. Involved in apoptotic DNA degradation. Involved in regulation of antisense ribosomal siRNA production. Involved in response to cold-warm shock. This is Exosome complex component 10 homolog from Caenorhabditis elegans.